Here is a 1013-residue protein sequence, read N- to C-terminus: Polyprotein of EF-Ts, chloroplastic (1013 aa).

Residues 1–43 (MLRELGRTATVKAHGRSVLRPVRGPAGRRQVAFTGVRPSVRVF) constitute a chloroplast transit peptide. Residues 64-133 (GSEYEGTVTT…EKKRVSLELK (70 aa)) enclose the S1 motif 1 domain. Over residues 141-150 (SAEESDDIIT) the composition is skewed to acidic residues. The interval 141–163 (SAEESDDIITEPDREGADATDDD) is disordered. The region spanning 227-331 (MEEVTGKVAR…DGRGISLTHF (105 aa)) is the S1 motif 2 domain. Residues 772–798 (QAKAAAPAAPKKEEPKKEEPKKATVAV) are disordered. The span at 781 to 793 (PKKEEPKKEEPKK) shows a compositional bias: basic and acidic residues.

The protein belongs to the EF-Ts family. As to quaternary structure, component of the chloroplast ribosome 30S and 70S subunits, as well as polysomes. Component of the chloroplast ribosome 70S subunit, and at low levels, present in polysomes. In terms of assembly, associates transiently with chloroplast polysomes.

Its subcellular location is the plastid. It localises to the chloroplast. Associates with the EF-Tu.GDP complex and induces the exchange of GDP to GTP. It remains bound to the aminoacyl-tRNA.EF-Tu.GTP complex up to the GTP hydrolysis stage on the ribosome. Its function is as follows. Binds to psbD and psbA mRNAs 5'-untranslated regions (UTRs) in vitro. In Chlamydomonas reinhardtii (Chlamydomonas smithii), this protein is Polyprotein of EF-Ts, chloroplastic.